A 338-amino-acid polypeptide reads, in one-letter code: Beta-ketoacyl-[acyl-carrier-protein] synthase III 2 (338 aa).

Residues Cys-119 and His-255 contribute to the active site. Residues 256–260 (QANIR) are ACP-binding. Asn-285 is a catalytic residue.

The protein belongs to the thiolase-like superfamily. FabH family. As to quaternary structure, homodimer.

It is found in the cytoplasm. It catalyses the reaction malonyl-[ACP] + acetyl-CoA + H(+) = 3-oxobutanoyl-[ACP] + CO2 + CoA. Its pathway is lipid metabolism; fatty acid biosynthesis. Functionally, catalyzes the condensation reaction of fatty acid synthesis by the addition to an acyl acceptor of two carbons from malonyl-ACP. Catalyzes the first condensation reaction which initiates fatty acid synthesis and may therefore play a role in governing the total rate of fatty acid production. Possesses both acetoacetyl-ACP synthase and acetyl transacylase activities. Its substrate specificity determines the biosynthesis of branched-chain and/or straight-chain of fatty acids. The sequence is that of Beta-ketoacyl-[acyl-carrier-protein] synthase III 2 from Deinococcus radiodurans (strain ATCC 13939 / DSM 20539 / JCM 16871 / CCUG 27074 / LMG 4051 / NBRC 15346 / NCIMB 9279 / VKM B-1422 / R1).